A 568-amino-acid chain; its full sequence is Phosphoprotein (568 aa).

Disordered stretches follow at residues 1-23 (MDQDAFILKEDSEVEREAPGGRE) and 38-320 (SEPT…GIGE). Positions 7 to 20 (ILKEDSEVEREAPG) are enriched in basic and acidic residues. The tract at residues 33 to 41 (DAVLSSEPT) is N0 binding. Residues 50–59 (LHNTINTPQG) show a composition bias toward polar residues. Position 68 is a phosphoserine; by host (S68). Residues 83–101 (RSGEESRVSGRTSKPEAEA) are compositionally biased toward basic and acidic residues. S125 carries the phosphoserine; by host modification. Basic and acidic residues predominate over residues 150-168 (GIEDENREMAAHPDKRGED). Residues 191–206 (ASNNGRSMEPGSSHSA) show a composition bias toward polar residues. A phosphoserine; by host mark is found at S192, S249, S257, and S260. Residues 344-411 (FESSRDASYV…SFRDIYKRFS (68 aa)) are multimerization. The stretch at 364–429 (YAEMTFNVCG…LLMSNLSTLH (66 aa)) forms a coiled coil. A l protein binding region spans residues 412-445 (EYQKEQNSLLMSNLSTLHIITDRGGKTDNTDSLT). Phosphoserine; by host is present on residues S447 and S449. The segment at 479–568 (DLIREDEFRD…VEEDIESLTN (90 aa)) is interaction with the nucleocapsid (N-RNA). Residues 496–516 (QERDTEPRASNASRLLPSKEK) form a disordered region. The formation of N-RNA complex involved in transcription and replication stretch occupies residues 547-566 (KTDQEVKAVMELVEEDIESL).

The protein belongs to the respirovirus P protein family. Homotetramer. Interacts (via multimerization domain) with polymerase L; this interaction forms the polymerase complex. Interacts (via N-terminus) with N0; this interaction allows P to chaperon N0 before encapsidation and form the N-P complex. Interacts (via C-terminus) with N-RNA template; this interaction positions the polymerase on the template. In terms of processing, phosphorylated by PKC/PRKCZ, and other unknown kinases. Phosphorylation is necessary for viral transcription and replication. The N-terminus contains the majority of phosphorylated sites. Ser-249 is the major site of phosphorylation, but is not necessary for most functions.

It is found in the host cytoplasm. In terms of biological role, essential cofactor of the RNA polymerase L that plays a central role in the transcription and replication by forming the polymerase complex with RNA polymerase L and recruiting L to the genomic N-RNA template for RNA synthesis. Also plays a central role in the encapsidation of nascent RNA chains by forming the encapsidation complex with the nucleocapsid protein N (N-P complex). Acts as a chaperone for newly synthesized free N protein, so-called N0, allowing encapsidation of nascent RNA chains during replication. The nucleoprotein protein N prevents excessive phosphorylation of P, which leads to down-regulation of viral transcription/ replication. Participates, together with N, in the formation of viral factories (viroplasms), which are large inclusions in the host cytoplasm where replication takes place. Recruits host PI4KB and remodel the host endoplasmic reticulum membrane to form viral replication factories. The polypeptide is Phosphoprotein (P/V/C) (Cavia cutleri (Guinea pig)).